A 92-amino-acid polypeptide reads, in one-letter code: Transcriptional regulator WhiB1 (92 aa).

Residues 12 to 74 (ACRDKDPELF…GGLSEDERRA (63 aa)) enclose the 4Fe-4S Wbl-type domain. [4Fe-4S] cluster-binding residues include cysteine 13, cysteine 41, cysteine 44, and cysteine 50.

The protein belongs to the WhiB family. It depends on [4Fe-4S] cluster as a cofactor. In terms of processing, the Fe-S cluster can be nitrosylated by nitric oxide (NO). Post-translationally, upon Fe-S cluster removal intramolecular disulfide bonds are formed.

The protein localises to the cytoplasm. Its function is as follows. Acts as a transcriptional regulator. Probably redox-responsive. The apo- but not holo-form probably binds DNA. In Bifidobacterium longum (strain NCC 2705), this protein is Transcriptional regulator WhiB1 (whiB1).